A 30-amino-acid polypeptide reads, in one-letter code: Cytochrome c3, 50 kDa (30 aa).

In terms of assembly, monomer. Binds 4 heme groups per subunit.

It localises to the periplasm. In terms of biological role, participates in sulfate respiration coupled with phosphorylation by transferring electrons from the enzyme dehydrogenase to ferredoxin. The protein is Cytochrome c3, 50 kDa of Desulfuromonas acetoxidans (Chloropseudomonas ethylica).